The sequence spans 174 residues: Large ribosomal subunit protein uL16 (174 aa).

It belongs to the universal ribosomal protein uL16 family.

The polypeptide is Large ribosomal subunit protein uL16 (Archaeoglobus fulgidus (strain ATCC 49558 / DSM 4304 / JCM 9628 / NBRC 100126 / VC-16)).